Here is a 590-residue protein sequence, read N- to C-terminus: Aspartate--tRNA(Asp/Asn) ligase (590 aa).

Residue glutamate 176 coordinates L-aspartate. Positions 200–203 (QLFK) are aspartate. Positions 222 and 451 each coordinate L-aspartate. 222–224 (RDE) provides a ligand contact to ATP. Glutamate 485 serves as a coordination point for ATP. An L-aspartate-binding site is contributed by arginine 492. ATP is bound at residue 537–540 (GIDR).

Belongs to the class-II aminoacyl-tRNA synthetase family. Type 1 subfamily. In terms of assembly, homodimer.

The protein localises to the cytoplasm. It catalyses the reaction tRNA(Asx) + L-aspartate + ATP = L-aspartyl-tRNA(Asx) + AMP + diphosphate. Aspartyl-tRNA synthetase with relaxed tRNA specificity since it is able to aspartylate not only its cognate tRNA(Asp) but also tRNA(Asn). Reaction proceeds in two steps: L-aspartate is first activated by ATP to form Asp-AMP and then transferred to the acceptor end of tRNA(Asp/Asn). This is Aspartate--tRNA(Asp/Asn) ligase from Ehrlichia ruminantium (strain Welgevonden).